The sequence spans 497 residues: Probable gamma-aminobutyrate transaminase 2, mitochondrial (497 aa).

A mitochondrion-targeting transit peptide spans 1–37 (MNLIKHAAFAASFQGETDCTSHASARKFSTSGSSPLL). Pyridoxal 5'-phosphate is bound at residue 153–154 (GS). Y186 contributes to the substrate binding site. D293 is a binding site for pyridoxal 5'-phosphate. K322 lines the substrate pocket. Position 322 is an N6-(pyridoxal phosphate)lysine (K322).

It belongs to the class-III pyridoxal-phosphate-dependent aminotransferase family.

Its subcellular location is the mitochondrion. It catalyses the reaction 4-aminobutanoate + pyruvate = succinate semialdehyde + L-alanine. The enzyme catalyses 4-aminobutanoate + glyoxylate = succinate semialdehyde + glycine. Functionally, transaminase that degrades gamma-amino butyric acid (GABA). The chain is Probable gamma-aminobutyrate transaminase 2, mitochondrial from Oryza sativa subsp. indica (Rice).